Reading from the N-terminus, the 398-residue chain is Carboxyaminopropylagmatine dehydrogenase (398 aa).

Belongs to the saccharopine dehydrogenase family.

It catalyses the reaction N(1)-[(S)-3-amino-3-carboxypropyl]agmatine + NADP(+) + H2O = L-aspartate 4-semialdehyde + agmatine + NADPH + H(+). The protein operates within amine and polyamine biosynthesis; spermidine biosynthesis. Dehydrogenase involved in the biosynthesis of spermidine via the carboxyaminopropylagmatine (CAPA) pathway. Catalyzes the reductive condensation of agmatine and L-aspartate-beta-semialdehyde (ASA) into CAPA. Shows activity toward putrescine and 1,3-diaminopropane, but the catalytic efficiency is three to four orders of magnitude lower than that for agmatine. Cannot use cadaverine or spermidine. This Synechocystis sp. (strain ATCC 27184 / PCC 6803 / Kazusa) protein is Carboxyaminopropylagmatine dehydrogenase.